We begin with the raw amino-acid sequence, 408 residues long: GDSL esterase/lipase At1g54790 (408 aa).

Positions 1–24 (MNITKMKLFYVILFFISSLQISNS) are cleaved as a signal peptide. Ser-38 acts as the Nucleophile in catalysis. 3 N-linked (GlcNAc...) asparagine glycosylation sites follow: Asn-273, Asn-289, and Asn-361. Active-site residues include Asp-370 and His-373.

It belongs to the 'GDSL' lipolytic enzyme family.

The protein localises to the secreted. This chain is GDSL esterase/lipase At1g54790, found in Arabidopsis thaliana (Mouse-ear cress).